Here is a 168-residue protein sequence, read N- to C-terminus: uncharacterized protein (168 aa).

Over residues 1 to 15 the composition is skewed to low complexity; it reads MKRIISSSKSLKQLS. Residues 1-107 are disordered; it reads MKRIISSSKS…NNNNNNNNNN (107 aa). The span at 33–47 shows a compositional bias: acidic residues; it reads SDSDSDSDSDSDSDS. Positions 48–107 are enriched in low complexity; the sequence is DSNSNSNSNSNSNSNSNSNSNSNSNSNNNNNNTNNNNNNNNNNNNNNNNNNNNNNNNNNN.

This is an uncharacterized protein from Dictyostelium discoideum (Social amoeba).